An 870-amino-acid polypeptide reads, in one-letter code: Histidine biosynthesis trifunctional protein (870 aa).

The interval 1 to 285 (METTLPLPFL…KFVVKQKGRF (285 aa)) is phosphoribosyl-AMP cyclohydrolase. The segment at 286 to 367 (CHLDQSGCFG…FYFALTRAVA (82 aa)) is phosphoribosyl-ATP pyrophosphohydrolase. The histidinol dehydrogenase stretch occupies residues 368–870 (AGVTLADIER…IRLEHMSKSN (503 aa)). Residues glutamine 693 and histidine 696 each coordinate Zn(2+). Active-site residues include glutamate 762 and histidine 763. 2 residues coordinate Zn(2+): aspartate 796 and histidine 855.

In the C-terminal section; belongs to the histidinol dehydrogenase family. Zn(2+) is required as a cofactor.

It carries out the reaction 1-(5-phospho-beta-D-ribosyl)-5'-AMP + H2O = 1-(5-phospho-beta-D-ribosyl)-5-[(5-phospho-beta-D-ribosylamino)methylideneamino]imidazole-4-carboxamide. The catalysed reaction is 1-(5-phospho-beta-D-ribosyl)-ATP + H2O = 1-(5-phospho-beta-D-ribosyl)-5'-AMP + diphosphate + H(+). The enzyme catalyses L-histidinol + 2 NAD(+) + H2O = L-histidine + 2 NADH + 3 H(+). It participates in amino-acid biosynthesis; L-histidine biosynthesis; L-histidine from 5-phospho-alpha-D-ribose 1-diphosphate: step 2/9. Its pathway is amino-acid biosynthesis; L-histidine biosynthesis; L-histidine from 5-phospho-alpha-D-ribose 1-diphosphate: step 3/9. It functions in the pathway amino-acid biosynthesis; L-histidine biosynthesis; L-histidine from 5-phospho-alpha-D-ribose 1-diphosphate: step 9/9. This chain is Histidine biosynthesis trifunctional protein (his-3), found in Neurospora crassa (strain ATCC 24698 / 74-OR23-1A / CBS 708.71 / DSM 1257 / FGSC 987).